A 57-amino-acid polypeptide reads, in one-letter code: Small ribosomal subunit protein bS21B (57 aa).

The segment at 37 to 57 (RYEKPSARRKRKAEAARKRRR) is disordered. The segment covering 43 to 57 (ARRKRKAEAARKRRR) has biased composition (basic residues).

Belongs to the bacterial ribosomal protein bS21 family.

This chain is Small ribosomal subunit protein bS21B, found in Gloeobacter violaceus (strain ATCC 29082 / PCC 7421).